The following is a 1366-amino-acid chain: MNYSFTERKRVRKSFAKRVNNHQVPYLIATQLESYAKFLQADKPAMSRLTEGLQAAFTSAFPIVSNNGYARMEYVSYQLSQPPFDVKECQQRGYTYHSALRAKVRLIIYDREAPTKVKEVKESEVYMGEIPLMTENGSFVINGTERVIVSQLHRSPGVFFEHDKGKTHSSGKLLFSARIIPYRGSWLDFEFDPKDILYFRIDRRRKMPVTILLKAIGLNNEQILANFFNFDHFSLTANGGSMEFVPERLRGQLASFDVLDENGVVVIQKDKRINTKHIRELEAAKTKTIAVPDDYLIGRVVARNIVDPDSGEILAYANDEITEELLATLRDAGIKQLETIYTNDLDSGAYISQTLRTDETADQMAARIAIYRMLRPGEPPIEDAVEVLFQRLFYSEDTYDLSRVGRMKVNSRLNRPEMEGPMVLSSEDILDTIKSLVDLRNGKGEVDDIDHLGNRRVRCVGELAENQFRAGLSRVERAVKERLGQAETENLMPHDLTNSKPISSAIREFFGSSQLSQFMDQTNPLSEITHKRRISALGPGGLMRERAGFEVRDVHPTHYGRVCPIETPEGPNIGLINSLALFARLNEHGFLETPYRKVSNSKVSDEVVYLSAIEEAKYVIAQANATIDKSGKLADELVSARQAGETMMVSPERIDFIDVAPSQIVSAAASLVPFLEHDDANRALMGANMQRQAVPCLRPDKPLVGTGLERIVAVDSGTVVLAARGGIVDYVDANRVVIRVNDDETTAGEVGVDIYNLIKYTRSNQNTNINQRPIVKVGDRVARGDVVADGASTDLGELALGQNMTVAFMPWNGYNFEDSILISEKVVADDRYTSIHIEELSVVARDTKLGSEEITRDISNLAESQLSRLDESGIVYIGAEVEAGDVLVGKVTPKGETTLTPEEKLLRAIFGEKASDVKDTSLRVPSGMIGTIIDVQVFTREGIERDARAQSIIQEELQRYRLGLNDQLRIVEGDAFMRLEKLLIGKVANGGPKKLAKGTKIDKEYLADLDKYHRFDVRPADDEVASQVEAIKSSIEAKRKQFDEAFEEKRTKLTQGDDLQPGVTKMVKVYLAVKRRLQPGDKMAGRHGNKGVVSKIAPAEDMPFMADGRPVDIVLNPLGVPSRMNVGQILETHLGWAAQGIGKRVDEMVRQQAKQAELREFLKQLYNETGRIEDIDNFTDEQITVLAENLRQGLPFATPVFDGATEAEIGRMLELAYPEEVATSLKMTPSRQQMILCDGRTGDQFERPATVGVMHVLKLHHLVDDKMHARSTGPYSLVTQQPLGGKAQFGGQRFGEMEVWALEAYGASYVLQEMLTVKSDDVAGRTKVYENIVKGEHTIDAGMPESFNVLVKEIRSLGIEIDMERN.

This sequence belongs to the RNA polymerase beta chain family. In terms of assembly, the RNAP catalytic core consists of 2 alpha, 1 beta, 1 beta' and 1 omega subunit. When a sigma factor is associated with the core the holoenzyme is formed, which can initiate transcription.

It carries out the reaction RNA(n) + a ribonucleoside 5'-triphosphate = RNA(n+1) + diphosphate. DNA-dependent RNA polymerase catalyzes the transcription of DNA into RNA using the four ribonucleoside triphosphates as substrates. The chain is DNA-directed RNA polymerase subunit beta from Polynucleobacter necessarius subsp. necessarius (strain STIR1).